Here is a 330-residue protein sequence, read N- to C-terminus: DNA-directed RNA polymerase subunit alpha (330 aa).

The alpha N-terminal domain (alpha-NTD) stretch occupies residues 1-236 (MQGSVTEFLK…EQLDAFVDLR (236 aa)). The interval 250 to 330 (FDPILLRPVD…NWPPASIAED (81 aa)) is alpha C-terminal domain (alpha-CTD).

Belongs to the RNA polymerase alpha chain family. As to quaternary structure, homodimer. The RNAP catalytic core consists of 2 alpha, 1 beta, 1 beta' and 1 omega subunit. When a sigma factor is associated with the core the holoenzyme is formed, which can initiate transcription.

The catalysed reaction is RNA(n) + a ribonucleoside 5'-triphosphate = RNA(n+1) + diphosphate. Its function is as follows. DNA-dependent RNA polymerase catalyzes the transcription of DNA into RNA using the four ribonucleoside triphosphates as substrates. The protein is DNA-directed RNA polymerase subunit alpha of Vibrio vulnificus (strain CMCP6).